The primary structure comprises 221 residues: GTP cyclohydrolase 1 (221 aa).

Zn(2+)-binding residues include Cys-111, His-114, and Cys-182.

It belongs to the GTP cyclohydrolase I family. As to quaternary structure, homomer.

It catalyses the reaction GTP + H2O = 7,8-dihydroneopterin 3'-triphosphate + formate + H(+). Its pathway is cofactor biosynthesis; 7,8-dihydroneopterin triphosphate biosynthesis; 7,8-dihydroneopterin triphosphate from GTP: step 1/1. This is GTP cyclohydrolase 1 from Erwinia tasmaniensis (strain DSM 17950 / CFBP 7177 / CIP 109463 / NCPPB 4357 / Et1/99).